Consider the following 280-residue polypeptide: Cell division protein SepF (280 aa).

Residues 22–117 (DYVDDRAPRA…DDYPEDAYGE (96 aa)) form a disordered region. Composition is skewed to basic and acidic residues over residues 25–36 (DDRAPRASERGG) and 53–83 (RYGE…GADR).

Belongs to the SepF family. Homodimer. Interacts with FtsZ.

The protein localises to the cytoplasm. Its function is as follows. Cell division protein that is part of the divisome complex and is recruited early to the Z-ring. Probably stimulates Z-ring formation, perhaps through the cross-linking of FtsZ protofilaments. Its function overlaps with FtsA. The sequence is that of Cell division protein SepF from Nocardia farcinica (strain IFM 10152).